The chain runs to 132 residues: Small ribosomal subunit protein uS8 (132 aa).

This sequence belongs to the universal ribosomal protein uS8 family. In terms of assembly, part of the 30S ribosomal subunit. Contacts proteins S5 and S12.

In terms of biological role, one of the primary rRNA binding proteins, it binds directly to 16S rRNA central domain where it helps coordinate assembly of the platform of the 30S subunit. The protein is Small ribosomal subunit protein uS8 of Rickettsia bellii (strain OSU 85-389).